The following is a 51-amino-acid chain: Insulin (51 aa).

Cystine bridges form between C8/C37, C20/C50, and C36/C41.

This sequence belongs to the insulin family. Heterodimer of a B chain and an A chain linked by two disulfide bonds.

It localises to the secreted. Insulin decreases blood glucose concentration. It increases cell permeability to monosaccharides, amino acids and fatty acids. It accelerates glycolysis, the pentose phosphate cycle, and glycogen synthesis in liver. The sequence is that of Insulin (ins) from Platichthys flesus (European flounder).